Consider the following 153-residue polypeptide: MDIGEILNLLPHRYPFLLVDRVVEIIPGQKLTAYKNVTINEPFFNGHFPGHPVMPGVLILEALAQATAILAYKSENMDPSRKLTYLMGVDGARFRKPVLPGDRLQLEIEVVRHKGAVWKTKGLATVDGARVAEGEFLATVVDKDADAAESAAS.

Residue His47 is part of the active site.

It belongs to the thioester dehydratase family. FabZ subfamily.

It localises to the cytoplasm. It catalyses the reaction a (3R)-hydroxyacyl-[ACP] = a (2E)-enoyl-[ACP] + H2O. Functionally, involved in unsaturated fatty acids biosynthesis. Catalyzes the dehydration of short chain beta-hydroxyacyl-ACPs and long chain saturated and unsaturated beta-hydroxyacyl-ACPs. This chain is 3-hydroxyacyl-[acyl-carrier-protein] dehydratase FabZ, found in Myxococcus xanthus (strain DK1622).